Reading from the N-terminus, the 314-residue chain is Methionyl-tRNA formyltransferase (314 aa).

(6S)-5,6,7,8-tetrahydrofolate is bound at residue 112–115 (SLLP).

The protein belongs to the Fmt family.

It catalyses the reaction L-methionyl-tRNA(fMet) + (6R)-10-formyltetrahydrofolate = N-formyl-L-methionyl-tRNA(fMet) + (6S)-5,6,7,8-tetrahydrofolate + H(+). In terms of biological role, attaches a formyl group to the free amino group of methionyl-tRNA(fMet). The formyl group appears to play a dual role in the initiator identity of N-formylmethionyl-tRNA by promoting its recognition by IF2 and preventing the misappropriation of this tRNA by the elongation apparatus. In Aeromonas hydrophila subsp. hydrophila (strain ATCC 7966 / DSM 30187 / BCRC 13018 / CCUG 14551 / JCM 1027 / KCTC 2358 / NCIMB 9240 / NCTC 8049), this protein is Methionyl-tRNA formyltransferase.